We begin with the raw amino-acid sequence, 763 residues long: Amine oxidase [copper-containing] 3 (763 aa).

Residues 1-5 (MNQKT) lie on the Cytoplasmic side of the membrane. A helical; Signal-anchor for type II membrane protein transmembrane segment spans residues 6–26 (ILVLLILAVITIFALVCVLLV). Residues 27–763 (GRGGDGGEPS…AFSHGGFSHN (737 aa)) lie on the Extracellular side of the membrane. S43 is a glycosylation site (O-linked (GalNAc...) serine). The N-linked (GlcNAc...) asparagine glycan is linked to N137. An intrachain disulfide couples C198 to C199. A glycan (O-linked (GalNAc...) threonine) is linked at T212. N232 and N294 each carry an N-linked (GlcNAc...) asparagine glycan. D386 (proton acceptor) is an active-site residue. C404 and C430 are oxidised to a cystine. Y471 functions as the Schiff-base intermediate with substrate; via topaquinone in the catalytic mechanism. Y471 carries the post-translational modification 2',4',5'-topaquinone. Cu(2+) contacts are provided by H520 and H522. 4 residues coordinate Ca(2+): D529, L530, D531, and E572. A glycan (N-linked (GlcNAc...) (complex) asparagine) is linked at N592. N-linked (GlcNAc...) asparagine glycosylation is present at N618. Ca(2+) contacts are provided by E641, F663, and N665. N-linked (GlcNAc...) asparagine glycosylation occurs at N666. Positions 667, 673, and 674 each coordinate Ca(2+). An O-linked (GlcNAc) threonine glycan is attached at T679. H684 is a Cu(2+) binding site. Cysteines 734 and 741 form a disulfide.

Belongs to the copper/topaquinone oxidase family. In terms of assembly, homodimer; disulfide-linked. Can heterodimerize with isoform 2 leading to reduced surface expression. Probably forms heterodimers with AOC2. The cofactor is Cu(2+). Ca(2+) is required as a cofactor. Requires L-topaquinone as cofactor. Topaquinone (TPQ) is generated by copper-dependent autoxidation of a specific tyrosyl residue. In terms of processing, N- and O-glycosylated. As to expression, strongly expressed on the high endothelial venules of peripheral lymph nodes and on hepatic endothelia. Also highly expressed in appendix, lung and small intestine. Expressed also in adipose tissue, in bone marrow, colon, heart, kidney, ovary, pancreas, placenta, prostate, skeletal muscle, spleen and testis. Isoform 2 seems to be the predominant transcript in fetal kidneys, fetal cartilage and fetal tonsils. The highest relative expression of isoform 2 occurs in skeletal muscle, heart, pancreas, kidney, and lung.

Its subcellular location is the cell membrane. The enzyme catalyses methylamine + O2 + H2O = formaldehyde + H2O2 + NH4(+). It carries out the reaction benzylamine + O2 + H2O = benzaldehyde + H2O2 + NH4(+). The catalysed reaction is 2-phenylethylamine + O2 + H2O = 2-phenylacetaldehyde + H2O2 + NH4(+). Functionally, catalyzes the oxidative deamination of primary amines to the corresponding aldehydes with the concomitant production of hydrogen peroxide and ammonia. Has a preference for the primary monoamines methylamine and benzylamine. Could also act on 2-phenylethylamine but much less efficiently. At endothelial cells surface can also function as a cell adhesion protein that participates in lymphocyte extravasation and recirculation by mediating the binding of lymphocytes to peripheral lymph node vascular endothelial cells in an L-selectin-independent fashion. Its function is as follows. Has no semicarbazide-sensitive amine oxidase (SSAO) activity. The protein is Amine oxidase [copper-containing] 3 of Homo sapiens (Human).